Reading from the N-terminus, the 94-residue chain is Co-chaperonin GroES (94 aa).

It belongs to the GroES chaperonin family. As to quaternary structure, heptamer of 7 subunits arranged in a ring. Interacts with the chaperonin GroEL.

Its subcellular location is the cytoplasm. Together with the chaperonin GroEL, plays an essential role in assisting protein folding. The GroEL-GroES system forms a nano-cage that allows encapsulation of the non-native substrate proteins and provides a physical environment optimized to promote and accelerate protein folding. GroES binds to the apical surface of the GroEL ring, thereby capping the opening of the GroEL channel. In Streptococcus pneumoniae (strain CGSP14), this protein is Co-chaperonin GroES.